A 337-amino-acid polypeptide reads, in one-letter code: Inositol 2-dehydrogenase (337 aa).

The protein belongs to the Gfo/Idh/MocA family. As to quaternary structure, homotetramer.

It carries out the reaction myo-inositol + NAD(+) = scyllo-inosose + NADH + H(+). Its function is as follows. Involved in the oxidation of myo-inositol (MI) to 2-keto-myo-inositol (2KMI or 2-inosose). The sequence is that of Inositol 2-dehydrogenase from Burkholderia multivorans (strain ATCC 17616 / 249).